The sequence spans 526 residues: NAD(P)H-quinone oxidoreductase subunit 2 (526 aa).

14 helical membrane passes run 16–36 (ILPEGIVVITLLVVLVGDLIL), 43–63 (WTPYAAIVGLLGAIVALYTQW), 80–100 (LSIAFRGIIAISAITTILMSV), 110–130 (LGEFICILLTATLGAMFLSGA), 133–153 (LVMIFISLETLSISSYLLTGY), 168–188 (LLIGAASSAIFLYGISLLYGL), 212–232 (LALVIALVFAIAGISFKISAV), 246–266 (PTPVVAFLSVGSKAAGFALAI), 280–300 (WHFVFTALAILSMVLGNVVAL), 308–328 (LLAYSSIGQAGFVMIGLLANT), 336–356 (IFYLLVYLFMNLGGFTCVILF), 380–400 (LGLSLCLLSLGGIPPLAGFFG), 402–422 (IYLFWAGWQAGLYWLVLLGLI), and 468–488 (VGLILSVLATSLAGILSNPLF).

It belongs to the complex I subunit 2 family. NDH-1 can be composed of about 15 different subunits; different subcomplexes with different compositions have been identified which probably have different functions.

The protein resides in the cellular thylakoid membrane. The catalysed reaction is a plastoquinone + NADH + (n+1) H(+)(in) = a plastoquinol + NAD(+) + n H(+)(out). The enzyme catalyses a plastoquinone + NADPH + (n+1) H(+)(in) = a plastoquinol + NADP(+) + n H(+)(out). In terms of biological role, NDH-1 shuttles electrons from an unknown electron donor, via FMN and iron-sulfur (Fe-S) centers, to quinones in the respiratory and/or the photosynthetic chain. The immediate electron acceptor for the enzyme in this species is believed to be plastoquinone. Couples the redox reaction to proton translocation, and thus conserves the redox energy in a proton gradient. Cyanobacterial NDH-1 also plays a role in inorganic carbon-concentration. This chain is NAD(P)H-quinone oxidoreductase subunit 2, found in Trichodesmium erythraeum (strain IMS101).